A 420-amino-acid polypeptide reads, in one-letter code: Putative polyketide beta-ketoacyl synthase 1 (420 aa).

A Ketosynthase family 3 (KS3) domain is found at 3–414 (QRRVAITGIE…GFQSAMVLTS (412 aa)). Active-site for beta-ketoacyl synthase activity residues include C169, H307, and H344.

This sequence belongs to the thiolase-like superfamily. Beta-ketoacyl-ACP synthases family.

Its pathway is antifungal biosynthesis; monensin biosynthesis. This chain is Putative polyketide beta-ketoacyl synthase 1, found in Streptomyces virginiae (Streptomyces cinnamonensis).